We begin with the raw amino-acid sequence, 358 residues long: 4-hydroxy-3-methylbut-2-en-1-yl diphosphate synthase (flavodoxin) (358 aa).

The [4Fe-4S] cluster site is built by cysteine 270, cysteine 273, cysteine 305, and glutamate 312.

Belongs to the IspG family. [4Fe-4S] cluster is required as a cofactor.

It carries out the reaction (2E)-4-hydroxy-3-methylbut-2-enyl diphosphate + oxidized [flavodoxin] + H2O + 2 H(+) = 2-C-methyl-D-erythritol 2,4-cyclic diphosphate + reduced [flavodoxin]. It functions in the pathway isoprenoid biosynthesis; isopentenyl diphosphate biosynthesis via DXP pathway; isopentenyl diphosphate from 1-deoxy-D-xylulose 5-phosphate: step 5/6. Its function is as follows. Converts 2C-methyl-D-erythritol 2,4-cyclodiphosphate (ME-2,4cPP) into 1-hydroxy-2-methyl-2-(E)-butenyl 4-diphosphate. This is 4-hydroxy-3-methylbut-2-en-1-yl diphosphate synthase (flavodoxin) from Vesicomyosocius okutanii subsp. Calyptogena okutanii (strain HA).